The following is a 325-amino-acid chain: MKKNYYALAYYHFTRVDNPQEEIALHKELFKKLDVSCRIYISEQGINGQFSGYQPDAEYYMNWLKQRPGFSNVKFKIHHIEENIFPRATVKYRKELVALGCDVDLSNQGKHISPKEWHEKLEENRCLVLDVRNNYEWKIGHFENAVLPDIQTFREFPEYAEQLSKEHDPETTPVMMYCTGGIRCELYSSLLLEKGFKEVYQLDGGVIAYGQAMGTGKWRGKLFVFDDRLAVPIDEADTDVSPIAQCSHCEASCDTYYNCANTDCNNLFICCEECIHSTKGCCSQECSQAPRIRSFSTSRGNKPFRRMHLCEISEEQEKPLSCCLR.

Residues 122–218 enclose the Rhodanese domain; it reads EENRCLVLDV…YGQAMGTGKW (97 aa). Catalysis depends on Cys178, which acts as the Cysteine persulfide intermediate.

It belongs to the TrhO family.

The catalysed reaction is uridine(34) in tRNA + AH2 + O2 = 5-hydroxyuridine(34) in tRNA + A + H2O. Its function is as follows. Catalyzes oxygen-dependent 5-hydroxyuridine (ho5U) modification at position 34 in tRNAs. The protein is tRNA uridine(34) hydroxylase of Chlamydia felis (strain Fe/C-56) (Chlamydophila felis).